The primary structure comprises 1759 residues: Putative ATP-dependent RNA helicase TDRD12 (1759 aa).

Residues 74–153 (FQNLEQVWFS…KLSNTETRAV (80 aa)) form the Tudor 1 domain. Low complexity predominate over residues 480-495 (NSAASESSTKSSMDSS). Residues 480 to 506 (NSAASESSTKSSMDSSRISDEDDLSSD) are disordered. The Helicase ATP-binding domain occupies 611 to 789 (WGTILRGLST…DFLEPIVLKA (179 aa)). 624–631 (SPPRSGKT) contributes to the ATP binding site. Residues 823–980 (NVLQFIDSVQ…NVPKILDEVS (158 aa)) form the Helicase C-terminal domain. The Tudor 2 domain maps to 1335–1394 (GSNVGDIVLAKFPDDSMYERARIDHIYSEDKVKCFFVDQGDWRDVSTNDLATITENFITQ). In terms of domain architecture, CS spans 1618–1704 (LSKPKICWSQ…LMCRNWLALT (87 aa)).

In terms of assembly, interacts (via Tudor domain 2) with Siwi. Component of the PET complex, at least composed of EXD1, SIWI, TDRD12 and piRNAs. Expressed in the yolk cells. Not detected in yolk granules.

It is found in the chromosome. The protein resides in the cytoplasm. The protein localises to the cytosol. It localises to the nucleus membrane. The enzyme catalyses ATP + H2O = ADP + phosphate + H(+). Functionally, probable ATP-binding RNA helicase required during spermatogenesis to repress transposable elements and preventing their mobilization, which is essential for the germline integrity. Acts via the piRNA metabolic process, which mediates the repression of transposable elements during meiosis by forming complexes composed of piRNAs and Piwi proteins and governs the methylation and subsequent repression of transposons. This Bombyx mori (Silk moth) protein is Putative ATP-dependent RNA helicase TDRD12 (TDRD12).